The following is a 449-amino-acid chain: Bifunctional protein GlmU (449 aa).

A pyrophosphorylase region spans residues 1-229 (MNHFAVILAA…FEETIGVNDR (229 aa)). UDP-N-acetyl-alpha-D-glucosamine-binding positions include 8-11 (LAAG), Lys-22, Gln-72, and 77-78 (GT). Asp-102 provides a ligand contact to Mg(2+). Residues Gly-139, Glu-154, Asn-169, and Asn-227 each coordinate UDP-N-acetyl-alpha-D-glucosamine. Asn-227 lines the Mg(2+) pocket. The segment at 230 to 250 (VALAQAETSMRKRTNEHWMRQ) is linker. An N-acetyltransferase region spans residues 251–449 (GVTFIDPAST…ERQTTKPDYR (199 aa)). Residues Arg-332 and Lys-350 each coordinate UDP-N-acetyl-alpha-D-glucosamine. His-362 functions as the Proton acceptor in the catalytic mechanism. Residues Tyr-365 and Asn-376 each contribute to the UDP-N-acetyl-alpha-D-glucosamine site. Residues 385 to 386 (NY), Ala-422, and Arg-439 contribute to the acetyl-CoA site.

It in the N-terminal section; belongs to the N-acetylglucosamine-1-phosphate uridyltransferase family. The protein in the C-terminal section; belongs to the transferase hexapeptide repeat family. In terms of assembly, homotrimer. Mg(2+) is required as a cofactor.

The protein localises to the cytoplasm. It carries out the reaction alpha-D-glucosamine 1-phosphate + acetyl-CoA = N-acetyl-alpha-D-glucosamine 1-phosphate + CoA + H(+). The enzyme catalyses N-acetyl-alpha-D-glucosamine 1-phosphate + UTP + H(+) = UDP-N-acetyl-alpha-D-glucosamine + diphosphate. Its pathway is nucleotide-sugar biosynthesis; UDP-N-acetyl-alpha-D-glucosamine biosynthesis; N-acetyl-alpha-D-glucosamine 1-phosphate from alpha-D-glucosamine 6-phosphate (route II): step 2/2. It functions in the pathway nucleotide-sugar biosynthesis; UDP-N-acetyl-alpha-D-glucosamine biosynthesis; UDP-N-acetyl-alpha-D-glucosamine from N-acetyl-alpha-D-glucosamine 1-phosphate: step 1/1. The protein operates within bacterial outer membrane biogenesis; LPS lipid A biosynthesis. Catalyzes the last two sequential reactions in the de novo biosynthetic pathway for UDP-N-acetylglucosamine (UDP-GlcNAc). The C-terminal domain catalyzes the transfer of acetyl group from acetyl coenzyme A to glucosamine-1-phosphate (GlcN-1-P) to produce N-acetylglucosamine-1-phosphate (GlcNAc-1-P), which is converted into UDP-GlcNAc by the transfer of uridine 5-monophosphate (from uridine 5-triphosphate), a reaction catalyzed by the N-terminal domain. This chain is Bifunctional protein GlmU, found in Exiguobacterium sibiricum (strain DSM 17290 / CCUG 55495 / CIP 109462 / JCM 13490 / 255-15).